The sequence spans 29 residues: Cytochrome c oxidase subunit 7A2, mitochondrial (29 aa).

Position 10 is an N6-acetyllysine (Lys-10).

It belongs to the cytochrome c oxidase VIIa family. As to quaternary structure, component of the cytochrome c oxidase (complex IV, CIV), a multisubunit enzyme composed of 14 subunits. The complex is composed of a catalytic core of 3 subunits MT-CO1, MT-CO2 and MT-CO3, encoded in the mitochondrial DNA, and 11 supernumerary subunits COX4I, COX5A, COX5B, COX6A, COX6B, COX6C, COX7A, COX7B, COX7C, COX8 and NDUFA4, which are encoded in the nuclear genome. The complex exists as a monomer or a dimer and forms supercomplexes (SCs) in the inner mitochondrial membrane with NADH-ubiquinone oxidoreductase (complex I, CI) and ubiquinol-cytochrome c oxidoreductase (cytochrome b-c1 complex, complex III, CIII), resulting in different assemblies (supercomplex SCI(1)III(2)IV(1) and megacomplex MCI(2)III(2)IV(2)). Interacts with PET100.

Its subcellular location is the mitochondrion inner membrane. The protein operates within energy metabolism; oxidative phosphorylation. In terms of biological role, component of the cytochrome c oxidase, the last enzyme in the mitochondrial electron transport chain which drives oxidative phosphorylation. The respiratory chain contains 3 multisubunit complexes succinate dehydrogenase (complex II, CII), ubiquinol-cytochrome c oxidoreductase (cytochrome b-c1 complex, complex III, CIII) and cytochrome c oxidase (complex IV, CIV), that cooperate to transfer electrons derived from NADH and succinate to molecular oxygen, creating an electrochemical gradient over the inner membrane that drives transmembrane transport and the ATP synthase. Cytochrome c oxidase is the component of the respiratory chain that catalyzes the reduction of oxygen to water. Electrons originating from reduced cytochrome c in the intermembrane space (IMS) are transferred via the dinuclear copper A center (CU(A)) of subunit 2 and heme A of subunit 1 to the active site in subunit 1, a binuclear center (BNC) formed by heme A3 and copper B (CU(B)). The BNC reduces molecular oxygen to 2 water molecules using 4 electrons from cytochrome c in the IMS and 4 protons from the mitochondrial matrix. This chain is Cytochrome c oxidase subunit 7A2, mitochondrial (COX7A2), found in Canis lupus familiaris (Dog).